The sequence spans 249 residues: Probable phosphatase Spea_1436 (249 aa).

H8, H10, H16, H41, E74, H102, H132, D193, and H195 together coordinate Zn(2+).

It belongs to the PHP family. It depends on Zn(2+) as a cofactor.

The sequence is that of Probable phosphatase Spea_1436 from Shewanella pealeana (strain ATCC 700345 / ANG-SQ1).